Reading from the N-terminus, the 160-residue chain is Troponin C, isoform 2 (160 aa).

4 consecutive EF-hand domains span residues 15–50, 51–86, 92–127, and 128–160; these read DQIE…MGQA, FEER…FVVN, GLEE…LDDN, and VSEE…MSGE. Positions 64, 66, 68, 70, and 75 each coordinate Ca(2+). Positions 141, 143, 145, 147, and 152 each coordinate Ca(2+).

The protein belongs to the troponin C family. Pharyngeal muscle.

The polypeptide is Troponin C, isoform 2 (tnc-2) (Caenorhabditis elegans).